The following is a 252-amino-acid chain: Chitooligosaccharide deacetylase (252 aa).

Mg(2+) contacts are provided by H61 and H125.

It belongs to the YdjC deacetylase family. ChbG subfamily. Homodimer. Mg(2+) serves as cofactor.

It is found in the cytoplasm. The catalysed reaction is N,N'-diacetylchitobiose + H2O = N-acetyl-beta-D-glucosaminyl-(1-&gt;4)-D-glucosamine + acetate. It carries out the reaction diacetylchitobiose-6'-phosphate + H2O = N'-monoacetylchitobiose-6'-phosphate + acetate. Its pathway is glycan degradation; chitin degradation. Involved in the degradation of chitin. ChbG is essential for growth on the acetylated chitooligosaccharides chitobiose and chitotriose but is dispensable for growth on cellobiose and chitosan dimer, the deacetylated form of chitobiose. Deacetylation of chitobiose-6-P and chitotriose-6-P is necessary for both the activation of the chb promoter by the regulatory protein ChbR and the hydrolysis of phosphorylated beta-glucosides by the phospho-beta-glucosidase ChbF. Catalyzes the removal of only one acetyl group from chitobiose-6-P to yield monoacetylchitobiose-6-P, the inducer of ChbR and the substrate of ChbF. In Escherichia coli O6:H1 (strain CFT073 / ATCC 700928 / UPEC), this protein is Chitooligosaccharide deacetylase.